Consider the following 233-residue polypeptide: Large ribosomal subunit protein uL1 (233 aa).

The protein belongs to the universal ribosomal protein uL1 family. Part of the 50S ribosomal subunit.

Binds directly to 23S rRNA. The L1 stalk is quite mobile in the ribosome, and is involved in E site tRNA release. In terms of biological role, protein L1 is also a translational repressor protein, it controls the translation of the L11 operon by binding to its mRNA. The sequence is that of Large ribosomal subunit protein uL1 from Vibrio campbellii (strain ATCC BAA-1116).